The sequence spans 112 residues: MSGKTVTRADLAESVFRKVGLSRTESAELVETVIDEICNAIVRGESVKLSSFATFQVRDKNERIGRNPKTGEEVPISPRRVMTFKASNVLKQRVLKAHLSRKSKLKPSNPAG.

The protein belongs to the bacterial histone-like protein family. As to quaternary structure, heterodimer of an alpha and a beta chain.

In terms of biological role, this protein is one of the two subunits of integration host factor, a specific DNA-binding protein that functions in genetic recombination as well as in transcriptional and translational control. This chain is Integration host factor subunit alpha, found in Sinorhizobium medicae (strain WSM419) (Ensifer medicae).